A 300-amino-acid chain; its full sequence is L-threonine kinase (300 aa).

Position 92–102 (92–102 (PVAKGMASSTA)) interacts with ATP.

This sequence belongs to the GHMP kinase family. PduX subfamily.

The protein resides in the cytoplasm. It catalyses the reaction L-threonine + ATP = O-phospho-L-threonine + ADP + H(+). The protein operates within cofactor biosynthesis; adenosylcobalamin biosynthesis. It functions in the pathway polyol metabolism; 1,2-propanediol degradation. In terms of biological role, L-threonine kinase that catalyzes the conversion of L-threonine to L-threonine-O-3-phosphate. Involved in the de novo synthesis of adenosylcobalamin (coenzyme B12) and the assimilation of cobyric acid. Uses ATP; the activity with CTP, GTP or UTP is 6, 11, and 3% of the activity with ATP, respectively. Its function is as follows. The 1,2-propanediol (1,2-PD)-specific bacterial microcompartment (BMC) concentrates low levels of 1,2-PD catabolic enzymes, concentrates volatile reaction intermediates thus enhancing pathway flux and keeps the level of toxic, mutagenic propionaldehyde low. This gene probably benefits from its induction via the Pdu promoter, rather than a physical interaction with the BMC. The sequence is that of L-threonine kinase from Salmonella typhimurium (strain LT2 / SGSC1412 / ATCC 700720).